Consider the following 640-residue polypeptide: Cytochrome P450 monooxygenase cyp1 (640 aa).

The N-linked (GlcNAc...) asparagine glycan is linked to Asn71. Residues Leu120 to Trp139 traverse the membrane as a helical segment. Asn350 is a glycosylation site (N-linked (GlcNAc...) asparagine). Cys572 contacts heme.

It belongs to the cytochrome P450 family. Heme is required as a cofactor.

It localises to the membrane. It participates in secondary metabolite biosynthesis. Functionally, cytochrome P450 monooxygenase; part of the gene cluster that mediates the biosynthesis of the glycolipid biosurfactant ustilagic acid (UA). UA is a secreted cellobiose glycolipid that is toxic for many microorganisms and confers biocontrol activity to U.maydis. UA consists of 15,16-dihydroxypalmitic or 2,15,16-trihydroxypalmitic acid, which is O-glycosidically linked to cellobiose at its terminal hydroxyl group. In addition, the cellobiose moiety is acetylated and acylated with a short-chain hydroxy fatty acid. UA biosynthesis starts with omega-hydroxylation of palmitic acid catalyzed by the cytochrome P450 monooxygenase cyp1. Terminal hydroxylation of palmitic acid precedes subterminal hydroxylation catalyzed by the cytochrome P450 monooxygenase cyp2. Sequential glucosylation of the hydroxy fatty acid is probably catalyzed by the glycosyltransferase ugt1. The cellobiose lipid is further decorated by acetylation of the proximal glucose residue and by acylation with a short-chain beta-hydroxy fatty acid at the distal glucose residue. The acyltransferase uat1 may be a good candidate for catalyzing either acetylation or acylation of the cellobiose lipid. The fatty acid synthase fas2 may be involved in synthesis of the carbon backbone of the short-chain beta-hydroxy fatty acid esterified to the cellobiose disaccharide. The secreted UA consists of a mixture of both alpha-hydroxylated and non-hydroxylated glycolipids; therefore, alpha-hydroxylation of the long-chain fatty, catalyzed by the fatty acid hydroxylase ahd1, occurs late in UA biosynthesis and may be the last step before secretion. This is Cytochrome P450 monooxygenase cyp1 from Mycosarcoma maydis (Corn smut fungus).